The sequence spans 526 residues: Na(+)/H(+) antiporter NhaB (526 aa).

The next 11 helical transmembrane spans lie at 14–34 (FLGY…LVNP), 63–83 (CYPL…GMTS), 99–119 (MLLV…LFVF), 122–142 (LLLR…AAAF), 146–166 (FLDA…FYGI), 206–226 (LLMH…VGEP), 239–259 (FVSF…CGIL), 307–327 (AVIG…VGLI), 357–377 (FTAL…QQLF), 451–471 (ATPN…APLI), and 479–499 (VIMA…CVEF).

Belongs to the NhaB Na(+)/H(+) (TC 2.A.34) antiporter family.

Its subcellular location is the cell inner membrane. The catalysed reaction is 2 Na(+)(in) + 3 H(+)(out) = 2 Na(+)(out) + 3 H(+)(in). Its function is as follows. Na(+)/H(+) antiporter that extrudes sodium in exchange for external protons. The chain is Na(+)/H(+) antiporter NhaB from Pectobacterium carotovorum subsp. carotovorum (strain PC1).